Reading from the N-terminus, the 590-residue chain is UvrABC system protein C (590 aa).

The GIY-YIG domain maps to 15–98; it reads AEPGVYQFVA…VKRHQPRYNV (84 aa). The 36-residue stretch at 207-242 folds into the UVR domain; that stretch reads GALADPLRREMAAAAQAEAFERAANLRDRLAVVEGF.

Belongs to the UvrC family. As to quaternary structure, interacts with UvrB in an incision complex.

The protein localises to the cytoplasm. Functionally, the UvrABC repair system catalyzes the recognition and processing of DNA lesions. UvrC both incises the 5' and 3' sides of the lesion. The N-terminal half is responsible for the 3' incision and the C-terminal half is responsible for the 5' incision. The polypeptide is UvrABC system protein C (Halobacterium salinarum (strain ATCC 29341 / DSM 671 / R1)).